The primary structure comprises 282 residues: Formamidopyrimidine-DNA glycosylase (282 aa).

Pro2 acts as the Schiff-base intermediate with DNA in catalysis. The active-site Proton donor is Glu3. The active-site Proton donor; for beta-elimination activity is Lys60. His99, Arg118, and Lys163 together coordinate DNA. The FPG-type zinc-finger motif lies at 248–282; that stretch reads WVYRRSGKNCKKCGEKILREKICGRSTHWCPNCQK. The active-site Proton donor; for delta-elimination activity is Arg272.

This sequence belongs to the FPG family. As to quaternary structure, monomer. The cofactor is Zn(2+).

The catalysed reaction is Hydrolysis of DNA containing ring-opened 7-methylguanine residues, releasing 2,6-diamino-4-hydroxy-5-(N-methyl)formamidopyrimidine.. It catalyses the reaction 2'-deoxyribonucleotide-(2'-deoxyribose 5'-phosphate)-2'-deoxyribonucleotide-DNA = a 3'-end 2'-deoxyribonucleotide-(2,3-dehydro-2,3-deoxyribose 5'-phosphate)-DNA + a 5'-end 5'-phospho-2'-deoxyribonucleoside-DNA + H(+). Its function is as follows. Involved in base excision repair of DNA damaged by oxidation or by mutagenic agents. Acts as a DNA glycosylase that recognizes and removes damaged bases. Has a preference for oxidized purines, such as 7,8-dihydro-8-oxoguanine (8-oxoG). Has AP (apurinic/apyrimidinic) lyase activity and introduces nicks in the DNA strand. Cleaves the DNA backbone by beta-delta elimination to generate a single-strand break at the site of the removed base with both 3'- and 5'-phosphates. In Prochlorococcus marinus (strain NATL2A), this protein is Formamidopyrimidine-DNA glycosylase.